The following is a 585-amino-acid chain: Frizzled-5 (585 aa).

Residues 1–26 (MARPDPSAPPSLLLLLLAQLVGRAAA) form the signal peptide. At 27 to 238 (ASKAPVCQEI…PDERTFATFW (212 aa)) the chain is on the extracellular side. An FZ domain is found at 28–150 (SKAPVCQEIT…GDAEVLCMDY (123 aa)). 5 disulfides stabilise this stretch: Cys-33–Cys-94, Cys-41–Cys-87, Cys-78–Cys-116, Cys-105–Cys-147, and Cys-109–Cys-133. Asn-47 carries an N-linked (GlcNAc...) asparagine glycan. Residue Asn-151 is glycosylated (N-linked (GlcNAc...) asparagine). The segment at 156–182 (TTASPKSFPAKPTLPGPPGAPSSGGEC) is disordered. The helical transmembrane segment at 239–259 (IGLWSVLCFISTSTTVATFLI) threads the bilayer. Over 260–270 (DMERFRYPERP) the chain is Cytoplasmic. The helical transmembrane segment at 271–291 (IIFLSACYLCVSLGFLVRLVV) threads the bilayer. Topologically, residues 292–315 (GHASVACSREHSHIHYETTGPALC) are extracellular. Residues 316–336 (TVVFLLVYFFGMASSIWWVIL) traverse the membrane as a helical segment. Over 337 to 358 (SLTWFLAAGMKWGNEAIAGYAQ) the chain is Cytoplasmic. A helical transmembrane segment spans residues 359–379 (YFHLAAWLIPSVKSITALALS). At 380–402 (SVDGDPVAGICYVGNQNLNSLRG) the chain is on the extracellular side. A helical transmembrane segment spans residues 403-423 (FVLGPLVLYLLVGTLFLLAGF). The Cytoplasmic segment spans residues 424–449 (VSLFRIRSVIKQGGTKTDKLEKLMIR). Residues 450–470 (IGIFTLLYTVPASIVVACYLY) traverse the membrane as a helical segment. Topologically, residues 471 to 500 (EQHYRESWEAALTCACPGPDAGQPRAKPEY) are extracellular. The chain crosses the membrane as a helical span at residues 501-521 (WVLMLKYFMCLVVGITSGVWI). Topologically, residues 522-585 (WSGKTLESWR…YHKQVSLSHV (64 aa)) are cytoplasmic. Positions 582-584 (LSH) match the PDZ-binding motif.

The protein belongs to the G-protein coupled receptor Fz/Smo family. As to quaternary structure, binding of unsaturated fatty acid molecules (via FZ domain) promotes homodimerization (via FZ domain). Interacts with WNT2B. Interacts with WNT7A. Interacts with GOPC. Post-translationally, ubiquitinated by RNF43 and ZNRF3, leading to its degradation by the proteasome. As to expression, detected in hippocampus (at protein level). Expressed in eye, kidney, lung, chondrocytes, epithelial cells of the small intestine and gobelet cells of the colon.

The protein localises to the cell membrane. The protein resides in the golgi apparatus membrane. Its subcellular location is the synapse. It is found in the perikaryon. It localises to the cell projection. The protein localises to the dendrite. The protein resides in the axon. In terms of biological role, receptor for Wnt proteins. Functions in the canonical Wnt/beta-catenin signaling pathway. In vitro activates WNT2, WNT10B, WNT5A, but not WNT2B or WNT4 signaling. In neurons, activation by WNT7A promotes formation of synapses. May be involved in transduction and intercellular transmission of polarity information during tissue morphogenesis and/or in differentiated tissues. Plays a role in yolk sac angiogenesis and in placental vascularization. Plays a role in ocular development. The sequence is that of Frizzled-5 (Fzd5) from Mus musculus (Mouse).